A 143-amino-acid chain; its full sequence is MKGEREFRRVRQQGVALRDPLFTLRVTDYRPRHGEVWRPQAIIGIVVSKKTLRRAVDRNRARRRVREALRTLPGGLPPCRAILLPNPGVLTVPFPELQAALVRVLAQVPGRVKRKGGGPGGNRRSAPPGSAPLTDDGRLRGEP.

The tract at residues 111–143 is disordered; sequence RVKRKGGGPGGNRRSAPPGSAPLTDDGRLRGEP.

It belongs to the RnpA family. In terms of assembly, consists of a catalytic RNA component (M1 or rnpB) and a protein subunit.

The enzyme catalyses Endonucleolytic cleavage of RNA, removing 5'-extranucleotides from tRNA precursor.. RNaseP catalyzes the removal of the 5'-leader sequence from pre-tRNA to produce the mature 5'-terminus. It can also cleave other RNA substrates such as 4.5S RNA. The protein component plays an auxiliary but essential role in vivo by binding to the 5'-leader sequence and broadening the substrate specificity of the ribozyme. This Deinococcus geothermalis (strain DSM 11300 / CIP 105573 / AG-3a) protein is Ribonuclease P protein component.